The primary structure comprises 450 residues: ATP-dependent protease ATPase subunit HslU (450 aa).

ATP-binding positions include V29, 71 to 76, D261, E328, and R400; that span reads GVGKTE.

This sequence belongs to the ClpX chaperone family. HslU subfamily. As to quaternary structure, a double ring-shaped homohexamer of HslV is capped on each side by a ring-shaped HslU homohexamer. The assembly of the HslU/HslV complex is dependent on binding of ATP.

It localises to the cytoplasm. In terms of biological role, ATPase subunit of a proteasome-like degradation complex; this subunit has chaperone activity. The binding of ATP and its subsequent hydrolysis by HslU are essential for unfolding of protein substrates subsequently hydrolyzed by HslV. HslU recognizes the N-terminal part of its protein substrates and unfolds these before they are guided to HslV for hydrolysis. This Rickettsia rickettsii (strain Iowa) protein is ATP-dependent protease ATPase subunit HslU.